We begin with the raw amino-acid sequence, 173 residues long: MALMRSSWPLRLSITEQRSLSLLKSPEISCPGPVRSSSMMLLSLCPIPPTRSGRTSNSGNRGPVMTSTSSINSSKSWSGTLLPSLIPRCAMQPKHTLSQWRRDAVPTRQSISSTCWALTVQKKTGFPSKSTGRITKNTFSTASCGKRKANRVMTSSRKLSTTVPWMYSSPQSW.

Positions 49-72 (PTRSGRTSNSGNRGPVMTSTSSIN) are disordered.

This is an uncharacterized protein from Human adenovirus B serotype 7 (HAdV-7).